We begin with the raw amino-acid sequence, 393 residues long: Elongation factor Tu (393 aa).

The region spanning 6–204 (KPHINVGTIG…ALEKIELPMR (199 aa)) is the tr-type G domain. The interval 15-22 (GHVDHGKT) is G1. 15–22 (GHVDHGKT) contacts GTP. Mg(2+) is bound at residue threonine 22. The segment at 58–62 (GITIS) is G2. A G3 region spans residues 79–82 (DCPG). GTP is bound by residues 79–83 (DCPGH) and 134–137 (NKCD). A G4 region spans residues 134–137 (NKCD). Residues 172 to 174 (SAV) are G5.

The protein belongs to the TRAFAC class translation factor GTPase superfamily. Classic translation factor GTPase family. EF-Tu/EF-1A subfamily. Monomer.

The protein localises to the cytoplasm. The enzyme catalyses GTP + H2O = GDP + phosphate + H(+). In terms of biological role, GTP hydrolase that promotes the GTP-dependent binding of aminoacyl-tRNA to the A-site of ribosomes during protein biosynthesis. The polypeptide is Elongation factor Tu (Anaplasma phagocytophilum (strain HZ)).